The following is an 81-amino-acid chain: Spore coat protein F-like protein YraG (81 aa).

It belongs to the CotF family.

It is found in the spore coat. In Bacillus subtilis (strain 168), this protein is Spore coat protein F-like protein YraG (yraG).